Here is a 296-residue protein sequence, read N- to C-terminus: MLLEVLQAAEAGGFILIQDSVQCCGRGILRCCINAALKRDEDVHVLGFESPETEVCAGLDSSFAQKLHFHKGFPDPLGWRGKSSFTVQQFTSQHITQLIRDSQPAKASVLVVDSLSLVLRHHDPVIVCQSLQELRKGGVVKTIIGLLHSDLHLQGIVGIVCHLASTVISVAPTNNERHAVATTTRRTKSGKVMQEEEYFSVSEDATLSVQSKPRQHDRVEKEQDSAEVDPASNLTFNLRLSEEERRAKEKVALPFVFSQEKKSALLRPTPGSGRIMYEPDANDDFDEEDPDDDLDV.

Polar residues predominate over residues 203 to 212 (EDATLSVQSK). Disordered stretches follow at residues 203 to 232 (EDAT…DPAS) and 264 to 296 (ALLR…DLDV). Residues 214–224 (RQHDRVEKEQD) show a composition bias toward basic and acidic residues. Acidic residues predominate over residues 280 to 296 (DANDDFDEEDPDDDLDV).

This sequence belongs to the ELP5 family. Component of the elongator complex.

The protein resides in the nucleus. Its subcellular location is the cytoplasm. It participates in tRNA modification; 5-methoxycarbonylmethyl-2-thiouridine-tRNA biosynthesis. Component of the elongator complex which is required for multiple tRNA modifications, including mcm5U (5-methoxycarbonylmethyl uridine), mcm5s2U (5-methoxycarbonylmethyl-2-thiouridine), and ncm5U (5-carbamoylmethyl uridine). The elongator complex catalyzes the formation of carboxymethyluridine in the wobble base at position 34 in tRNAs. This is Elongator complex protein 5 (elp5) from Danio rerio (Zebrafish).